The following is a 111-amino-acid chain: Rubredoxin (111 aa).

The Rubredoxin-like domain maps to 11–62; that stretch reads LDRFECRSCGYVYEPEKGDNKHDIAPETPFAELPINWRCPVCTAKKAAFTNI. Residues Cys-16, Cys-19, Cys-49, and Cys-52 each contribute to the Fe cation site.

It belongs to the rubredoxin family. The cofactor is Fe(3+).

Functionally, rubredoxin is a small nonheme, iron protein lacking acid-labile sulfide. Its single Fe, chelated to 4 Cys, functions as an electron acceptor and may also stabilize the conformation of the molecule. Could be involved in hydrogenase-linked redox processes. The sequence is that of Rubredoxin (rub) from Nostoc sp. (strain PCC 7120 / SAG 25.82 / UTEX 2576).